Consider the following 310-residue polypeptide: Methionyl-tRNA formyltransferase (310 aa).

110-113 (SLLP) is a (6S)-5,6,7,8-tetrahydrofolate binding site.

Belongs to the Fmt family.

The catalysed reaction is L-methionyl-tRNA(fMet) + (6R)-10-formyltetrahydrofolate = N-formyl-L-methionyl-tRNA(fMet) + (6S)-5,6,7,8-tetrahydrofolate + H(+). Attaches a formyl group to the free amino group of methionyl-tRNA(fMet). The formyl group appears to play a dual role in the initiator identity of N-formylmethionyl-tRNA by promoting its recognition by IF2 and preventing the misappropriation of this tRNA by the elongation apparatus. The polypeptide is Methionyl-tRNA formyltransferase (Streptomyces coelicolor (strain ATCC BAA-471 / A3(2) / M145)).